A 114-amino-acid polypeptide reads, in one-letter code: Malate dehydrogenase (114 aa).

An NAD(+)-binding site is contributed by Asp-4. Positions 51 and 57 each coordinate substrate. NAD(+) contacts are provided by residues Asn-64 and 87 to 89 (ITN). Asn-89 is a binding site for substrate.

This sequence belongs to the LDH/MDH superfamily. MDH type 1 family. Homodimer.

The catalysed reaction is (S)-malate + NAD(+) = oxaloacetate + NADH + H(+). Functionally, catalyzes the reversible oxidation of malate to oxaloacetate. The sequence is that of Malate dehydrogenase (mdh) from Klebsiella pneumoniae subsp. rhinoscleromatis.